A 266-amino-acid polypeptide reads, in one-letter code: MAVGKNKRLTKGGKKGAKKKIVDPFSKKDWYDVKAPAMFNIRNIGKTLVSRTQGTRIASDGLKGRVFEVSLADLQNDEVAFRKFKLISEDVQGKNCLTNFHGMDLTRDKMCSMVKKWQTMIEAHVDVKTTDGYLLRLFCVGFTKKRTNQIRKTSYAQHQQVRQIRKKMMEIMTREVQTNDLKEVVNKLIPDSVGKDIEKACQSIYPLHDVYVRKVKMLKKPKFELGKLMELHGEGGGSSAAKPSGDDTGAKVDRADGYEPPIQETV.

Residues 233 to 266 (GEGGGSSAAKPSGDDTGAKVDRADGYEPPIQETV) form a disordered region. The segment covering 244–257 (SGDDTGAKVDRADG) has biased composition (basic and acidic residues).

Belongs to the eukaryotic ribosomal protein eS1 family. In terms of assembly, component of the small ribosomal subunit. Mature ribosomes consist of a small (40S) and a large (60S) subunit. The 40S subunit contains about 33 different proteins and 1 molecule of RNA (18S). The 60S subunit contains about 49 different proteins and 3 molecules of RNA (28S, 5.8S and 5S). Part of the small subunit (SSU) processome, composed of more than 70 proteins and the RNA chaperone small nucleolar RNA (snoRNA) U3.

It localises to the cytoplasm. It is found in the nucleus. The protein localises to the nucleolus. In terms of biological role, component of the small ribosomal subunit. The ribosome is a large ribonucleoprotein complex responsible for the synthesis of proteins in the cell. Part of the small subunit (SSU) processome, first precursor of the small eukaryotic ribosomal subunit. During the assembly of the SSU processome in the nucleolus, many ribosome biogenesis factors, an RNA chaperone and ribosomal proteins associate with the nascent pre-rRNA and work in concert to generate RNA folding, modifications, rearrangements and cleavage as well as targeted degradation of pre-ribosomal RNA by the RNA exosome. May play a role during erythropoiesis. This Salmo salar (Atlantic salmon) protein is Small ribosomal subunit protein eS1 (rps3a).